Consider the following 326-residue polypeptide: MAMAALRREGRRLAAAPFTSPTPLNALRSSLVSPSEEIGLSGVRSISTQVVRNRMKSVKNIQKITKAMKMVAASKLRAIQTRAENSRGLWQPFTALLGDTPSVDVKKNVIITISSDKGLCGGINSTSVKTSRNIHKLNSGPEKENKYVILGEKAKAQLVRDSKKDIELIITELQKNPLNYTQVSVVADDILKNVEFDALRIVFNKFQSVVSFVPTMSTVLSPEVVERESESGGKLGDLDSYEIEGAESKSEVLQNLTEFQFSSVLFNAVLENACSEQGARMSAMDSSSRNAGEMLDRLTLTYNRTRQASITTELIEIISGASALEG.

The N-terminal 45 residues, 1–45, are a transit peptide targeting the mitochondrion; that stretch reads MAMAALRREGRRLAAAPFTSPTPLNALRSSLVSPSEEIGLSGVRS.

This sequence belongs to the ATPase gamma chain family. As to quaternary structure, F-type ATPases have 2 components, CF(1) - the catalytic core - and CF(0) - the membrane proton channel. CF(1) has five subunits: alpha(3), beta(3), gamma(1), delta(1), epsilon(1). CF(0) has three main subunits: a, b and c.

It localises to the mitochondrion. The protein localises to the mitochondrion inner membrane. In terms of biological role, mitochondrial membrane ATP synthase (F(1)F(0) ATP synthase or Complex V) produces ATP from ADP in the presence of a proton gradient across the membrane which is generated by electron transport complexes of the respiratory chain. F-type ATPases consist of two structural domains, F(1) - containing the extramembraneous catalytic core, and F(0) - containing the membrane proton channel, linked together by a central stalk and a peripheral stalk. During catalysis, ATP synthesis in the catalytic domain of F(1) is coupled via a rotary mechanism of the central stalk subunits to proton translocation. Part of the complex F(1) domain and the central stalk which is part of the complex rotary element. The gamma subunit protrudes into the catalytic domain formed of alpha(3)beta(3). Rotation of the central stalk against the surrounding alpha(3)beta(3) subunits leads to hydrolysis of ATP in three separate catalytic sites on the beta subunits. The sequence is that of ATP synthase subunit gamma, mitochondrial (ATPC) from Ipomoea batatas (Sweet potato).